Reading from the N-terminus, the 60-residue chain is Large ribosomal subunit protein uL30 (60 aa).

It belongs to the universal ribosomal protein uL30 family. Part of the 50S ribosomal subunit.

The chain is Large ribosomal subunit protein uL30 from Ralstonia pickettii (strain 12J).